An 803-amino-acid chain; its full sequence is MNAPVQDAEARELALAGMRPRACAKEDARFIQGKGNYVDDIKMPGMLHMDIVRAPIAHGRIKKIHKDAALAMPGVHAVLTAEDLKPLKLHWMPTLAGDVAAVLADEKVHFQMQEVAIVIADDRYIAADAVEAVKVEYDELPVVIDPIDALKPDAPVLREDLAGKTSGAHGPREHHNHIFTWGAGDKAATDAVFANAPVTVSQHMYYPRVHPCPLETCGCVASFDPIKGDLTTYITSQAPHVVRTVVSMLSGIPESKVRIVSPDIGGGFGNKVGIYPGYVCAIVASIVLGRPVKWVEDRVENISTTAFARDYHMDGELAATPDGKILGLRVNVVADHGAFDACADPTKFPAGLFHICSGSYDIPRAHCSVKGVYTNKAPGGVAYRCSFRVTEAVYLIERMVDVLAQKLNMDKAEIRAKNFIRKEQFPYTTQFGFEYDSGDYHTALKKVLDAVDYPAWRAEQAARRADPNSPTLMGIGLVTFTEVVGAGPSKMCDILGVGMFDSCEIRIHPTGSAIARMGTITQGQGHQTTYAQIIATELGIPSEVIQVEEGDTSTAPYGLGTYGSRSTPVAGAAIALAARKIHAKARKIAAHMLEVNENDLDWEVDRFKVKGDDSKFKTMADIAWQAYHQPPAGLEPGLEAVHYYDPPNFTYPFGIYLCVVDIDRATGETKVRRFYALDDCGTRINPMIIEGQIHGGLTEGYAVAMGQQMPFDAQGNLLGNTLMDYFLPTAVETPHWETDHTVTPSPHHPIGAKGVAESPHVGSIPTFTAAVVDAFAHVGVTHLDMPHTSYRVWKSLKEHNLAL.

4-hydroxyarginine is present on Arg-384. Position 385 (Cys-385) interacts with Cu(+). Glu-757 contacts Mo-molybdopterin cytosine dinucleotide.

Dimer of heterotrimers. Each heterotrimer consists of a large, a medium and a small subunit. The cofactor is Cu(+). Mo-molybdopterin cytosine dinucleotide serves as cofactor.

The catalysed reaction is CO + a quinone + H2O = a quinol + CO2. Functionally, catalyzes the oxidation of carbon monoxide to carbon dioxide. This is Carbon monoxide dehydrogenase large chain (cutL) from Hydrogenophaga pseudoflava (Pseudomonas carboxydoflava).